The chain runs to 486 residues: Cobyric acid synthase (486 aa).

The 189-residue stretch at 251–439 (RAKIVVPMLS…VHGLFERGEA (189 aa)) folds into the GATase cobBQ-type domain. Residue Cys-333 is the Nucleophile of the active site. Residue His-431 is part of the active site.

This sequence belongs to the CobB/CobQ family. CobQ subfamily.

It functions in the pathway cofactor biosynthesis; adenosylcobalamin biosynthesis. Functionally, catalyzes amidations at positions B, D, E, and G on adenosylcobyrinic A,C-diamide. NH(2) groups are provided by glutamine, and one molecule of ATP is hydrogenolyzed for each amidation. The protein is Cobyric acid synthase of Caulobacter sp. (strain K31).